A 166-amino-acid polypeptide reads, in one-letter code: Mitochondrial fission process protein 1 (166 aa).

The next 3 membrane-spanning stretches (helical) occupy residues 33-53, 78-98, and 125-145; these read SLVK…YVAA, AIAA…IPGF, and TVTC…DSFV.

It belongs to the MTFP1 family.

The protein localises to the mitochondrion inner membrane. Its function is as follows. Involved in the mitochondrial division probably by regulating membrane fission. Loss-of-function leads to apoptosis. This Caenorhabditis elegans protein is Mitochondrial fission process protein 1 (mtp-18).